The sequence spans 102 residues: Protein Tat (102 aa).

Over residues 1–10 (MEPVDPRLEP) the composition is skewed to basic and acidic residues. Residues 1 to 20 (MEPVDPRLEPWNHPGSQPKT) are disordered. Residues 1 to 24 (MEPVDPRLEPWNHPGSQPKTACNK) form an interaction with human CREBBP region. The tract at residues 1–48 (MEPVDPRLEPWNHPGSQPKTACNKCYCKKCCYHCMCCFTKKGLGISYG) is transactivation. Zn(2+)-binding residues include Cys22, Cys25, and Cys27. A cysteine-rich region spans residues 22-37 (CNKCYCKKCCYHCMCC). Residue Lys28 is modified to N6-acetyllysine; by host PCAF. Zn(2+) is bound by residues Cys30, His33, Cys34, and Cys37. Residues 38–48 (FTKKGLGISYG) are core. Positions 47 to 102 (YGRKKRSQRRRPPKSSKDHQDPIPEQPLSRQQPGDQTGQKKQKKALEGKTEADPCD) are disordered. The segment covering 48-60 (GRKKRSQRRRPPK) has biased composition (basic residues). The Nuclear localization signal, RNA-binding (TAR), and protein transduction motif lies at 49 to 57 (RKKRSQRRR). Positions 49–87 (RKKRSQRRRPPKSSKDHQDPIPEQPLSRQQPGDQTGQKK) are interaction with the host capping enzyme RNGTT. N6-acetyllysine; by host EP300 and GCN5L2 occurs at positions 50 and 51. An Asymmetric dimethylarginine; by host PRMT6 modification is found at Arg52. Residues 74–85 (LSRQQPGDQTGQ) are compositionally biased toward polar residues. A compositionally biased stretch (basic and acidic residues) spans 90-102 (KALEGKTEADPCD).

It belongs to the lentiviruses Tat family. In terms of assembly, interacts with host CCNT1. Associates with the P-TEFb complex composed at least of Tat, P-TEFb (CDK9 and CCNT1), TAR RNA, RNA Pol II. Recruits the HATs CREBBP, TAF1/TFIID, EP300, PCAF and GCN5L2. Interacts with host KAT5/Tip60; this interaction targets the latter to degradation. Interacts with the host deacetylase SIRT1. Interacts with host capping enzyme RNGTT; this interaction stimulates RNGTT. Binds to host KDR, and to the host integrins ITGAV/ITGB3 and ITGA5/ITGB1. Interacts with host KPNB1/importin beta-1 without previous binding to KPNA1/importin alpha-1. Interacts with EIF2AK2. Interacts with host nucleosome assembly protein NAP1L1; this interaction may be required for the transport of Tat within the nucleus, since the two proteins interact at the nuclear rim. Interacts with host C1QBP/SF2P32; this interaction involves lysine-acetylated Tat. Interacts with the host chemokine receptors CCR2, CCR3 and CXCR4. Interacts with host DPP4/CD26; this interaction may trigger an anti-proliferative effect. Interacts with host LDLR. Interacts with the host extracellular matrix metalloproteinase MMP1. Interacts with host PRMT6; this interaction mediates Tat's methylation. Interacts with, and is ubiquitinated by MDM2/Hdm2. Interacts with host PSMC3 and HTATIP2. Interacts with STAB1; this interaction may overcome SATB1-mediated repression of IL2 and IL2RA (interleukin) in T cells by binding to the same domain than HDAC1. Interacts (when acetylated) with human CDK13, thereby increasing HIV-1 mRNA splicing and promoting the production of the doubly spliced HIV-1 protein Nef. Interacts with host TBP; this interaction modulates the activity of transcriptional pre-initiation complex. Interacts with host RELA. Interacts with host PLSCR1; this interaction negatively regulates Tat transactivation activity by altering its subcellular distribution. Asymmetrical arginine methylation by host PRMT6 seems to diminish the transactivation capacity of Tat and affects the interaction with host CCNT1. Post-translationally, acetylation by EP300, CREBBP, GCN5L2/GCN5 and PCAF regulates the transactivation activity of Tat. EP300-mediated acetylation of Lys-50 promotes dissociation of Tat from the TAR RNA through the competitive binding to PCAF's bromodomain. In addition, the non-acetylated Tat's N-terminus can also interact with PCAF. PCAF-mediated acetylation of Lys-28 enhances Tat's binding to CCNT1. Lys-50 is deacetylated by SIRT1. In terms of processing, polyubiquitination by host MDM2 does not target Tat to degradation, but activates its transactivation function and fosters interaction with CCNT1 and TAR RNA. Phosphorylated by EIF2AK2 on serine and threonine residues adjacent to the basic region important for TAR RNA binding and function. Phosphorylation of Tat by EIF2AK2 is dependent on the prior activation of EIF2AK2 by dsRNA.

Its subcellular location is the host nucleus. The protein resides in the host nucleolus. It is found in the host cytoplasm. The protein localises to the secreted. Functionally, transcriptional activator that increases RNA Pol II processivity, thereby increasing the level of full-length viral transcripts. Recognizes a hairpin structure at the 5'-LTR of the nascent viral mRNAs referred to as the transactivation responsive RNA element (TAR) and recruits the cyclin T1-CDK9 complex (P-TEFb complex) that will in turn hyperphosphorylate the RNA polymerase II to allow efficient elongation. The CDK9 component of P-TEFb and other Tat-activated kinases hyperphosphorylate the C-terminus of RNA Pol II that becomes stabilized and much more processive. Other factors such as HTATSF1/Tat-SF1, SUPT5H/SPT5, and HTATIP2 are also important for Tat's function. Besides its effect on RNA Pol II processivity, Tat induces chromatin remodeling of proviral genes by recruiting the histone acetyltransferases (HATs) CREBBP, EP300 and PCAF to the chromatin. This also contributes to the increase in proviral transcription rate, especially when the provirus integrates in transcriptionally silent region of the host genome. To ensure maximal activation of the LTR, Tat mediates nuclear translocation of NF-kappa-B by interacting with host RELA. Through its interaction with host TBP, Tat may also modulate transcription initiation. Tat can reactivate a latently infected cell by penetrating in it and transactivating its LTR promoter. In the cytoplasm, Tat is thought to act as a translational activator of HIV-1 mRNAs. Its function is as follows. Extracellular circulating Tat can be endocytosed by surrounding uninfected cells via the binding to several surface receptors such as CD26, CXCR4, heparan sulfate proteoglycans (HSPG) or LDLR. Neurons are rarely infected, but they internalize Tat via their LDLR. Through its interaction with nuclear HATs, Tat is potentially able to control the acetylation-dependent cellular gene expression. Modulates the expression of many cellular genes involved in cell survival, proliferation or in coding for cytokines or cytokine receptors. Tat plays a role in T-cell and neurons apoptosis. Tat induced neurotoxicity and apoptosis probably contribute to neuroAIDS. Circulating Tat also acts as a chemokine-like and/or growth factor-like molecule that binds to specific receptors on the surface of the cells, affecting many cellular pathways. In the vascular system, Tat binds to ITGAV/ITGB3 and ITGA5/ITGB1 integrins dimers at the surface of endothelial cells and competes with bFGF for heparin-binding sites, leading to an excess of soluble bFGF. This is Protein Tat from Human immunodeficiency virus type 1 group N (isolate YBF106) (HIV-1).